The following is a 530-amino-acid chain: TNF receptor-associated factor 6 (530 aa).

Residues 1–362 (MSLLNCENSC…EAQQCNGIYI (362 aa)) form an interaction with TAX1BP1 region. The RING-type; degenerate zinc-finger motif lies at 70-109 (CPICLMALREAVQTPCGHRFCKACITKSIRDAGHKCPVDN). A Glycyl lysine isopeptide (Lys-Gly) (interchain with G-Cter in SUMO); alternate cross-link involves residue lysine 124. Lysine 124 participates in a covalent cross-link: Glycyl lysine isopeptide (Lys-Gly) (interchain with G-Cter in ubiquitin); alternate. A Glycyl lysine isopeptide (Lys-Gly) (interchain with G-Cter in SUMO) cross-link involves residue lysine 142. 2 TRAF-type zinc fingers span residues 150-202 (DHQV…EEKE) and 203-259 (IHDQ…NHLA). A coiled-coil region spans residues 302-356 (NYEETVKQLEGRLVRQDHQIRELTAKMETQSMHVSELKRTIRSLEDKVAEMEAQQ). Residue lysine 327 forms a Glycyl lysine isopeptide (Lys-Gly) (interchain with G-Cter in ubiquitin) linkage. One can recognise an MATH domain in the interval 358–507 (NGIYIWKIGN…DDTLLVRCEV (150 aa)). The segment at 363 to 530 (WKIGNFGMHL…FQPRSTDAGV (168 aa)) is interaction with TANK. Lysine 461 participates in a covalent cross-link: Glycyl lysine isopeptide (Lys-Gly) (interchain with G-Cter in SUMO).

It belongs to the TNF receptor-associated factor family. A subfamily. Homotrimer. Homooligomer. N-terminal region is dimeric while C-terminal region is trimeric; maybe providing a mode of oligomerization. Upon IL1B treatment, forms a complex with PELI1, IRAK1, IRAK4 and MYD88; this complex recruits MAP3K7/TAK1, TAB1 and TAB2 to mediate NF-kappa-B activation. Direct binding of SMAD6 to PELI1 prevents the complex formation and hence negatively regulates IL1R-TLR signaling and eventually NF-kappa-B-mediated gene expression. Binds to TNFRSF5/CD40 and TNFRSF11A/RANK. Associates with NGFR, TNFRSF17, IRAK2, IRAK3, RIPK2, MAP3K1, MAP3K5, MAP3K14, CSK, TRAF, TRAF-interacting protein TRIP and TNF receptor associated protein TDP2. Interacts with IL17R. Interacts with SQSTM1 bridging NTRK1 and NGFR. Forms a ternary complex with SQSTM1 and PRKCZ. Interacts with PELI2 and PELI3. Binds UBE2V1. Interacts with TAX1BP1; this interaction mediates deubiquitination of TRAF6 and inhibition of NF-kappa-B activation. Interacts with ZNF675. Interacts with ARRB1 and ARRB2. Interacts with MAP3K7 and TAB1/MAP3K7IP1; during IL-1 signaling. Interacts with UBE2N. Interacts with TGFBR1, HDAC1 and RANGAP1. Interacts with AKT1, AKT2 and AKT3. Interacts (via TRAF domains) with NUMBL (via C-terminal). Interacts with RBCK1. Interacts with LIMD1 (via LIM domains). Interacts with RSAD2/viperin. Interacts (via C-terminus) with EIF2AK2/PKR (via the kinase catalytic domain). Interacts with ZFAND5. Interacts with IL1RL1. Interacts with TRAFD1. Interacts with AJUBA. Interacts with MAVS/IPS1. Interacts (via TRAF domains) with DYNC2I2 (via WD domains). Interacts with IFIT3 (via N-terminus). Interacts with TICAM2. Interacts with CARD14. Interacts with CD40 and MAP3K8; the interaction is required for ERK activation. Interacts with TICAM1 and this interaction is enhanced in the presence of WDFY1. Interacts with TANK; this interaction increases in response to DNA damage. Interacts with USP10; this interaction increases in response to DNA damage. Interacts with ZC3H12A; this interaction increases in response to DNA damage and is stimulated by TANK. Interacts with WDFY3. Interacts with TRIM13. Interacts with GPS2. Interacts (via C-terminus) with SASH1. Interacts with LRRC19. Interacts with IL17RA and TRAF3IP2. Interacts with TOMM70. Interacts with AMBRA1; interaction is required to mediate 'Lys-63'-linked ubiquitination of ULK1. Interacts with CRBN; this interaction inhibits TLR4-mediated signaling by preventing TRAF6-mediated ubiquitination of ECSIT. Sumoylated on Lys-124, Lys-142 and Lys-461 with SUMO1. In terms of processing, polyubiquitinated on Lys-124 by TRAF3IP2; after cell stimulation with IL17A. Polyubiquitinated; after cell stimulation with IL1B or TGFB. This ligand-induced cell stimulation leads to dimerization/oligomerization of TRAF6 molecules, followed by auto-ubiquitination which involves UBE2N and UBE2V1 and leads to TRAF6 activation. This 'Lys-63' site-specific poly-ubiquitination appears to be associated with the activation of signaling molecules. Endogenous autoubiquitination occurs only for the cytoplasmic form. Deubiquitinated by USP10 in a TANK-dependent manner, leading to the negative regulation of NF-kappa-B signaling upon DNA damage. LRRC19 induces 'Lys-63' ubiquitination. Ubiquitinated at Lys-327 by the SCF(FBXL2) complex, leading to its degradation by the proteasome.

The protein localises to the cytoplasm. It is found in the cell cortex. Its subcellular location is the nucleus. The protein resides in the lipid droplet. The catalysed reaction is S-ubiquitinyl-[E2 ubiquitin-conjugating enzyme]-L-cysteine + [acceptor protein]-L-lysine = [E2 ubiquitin-conjugating enzyme]-L-cysteine + N(6)-ubiquitinyl-[acceptor protein]-L-lysine.. It functions in the pathway protein modification; protein ubiquitination. E3 ubiquitin ligase that, together with UBE2N and UBE2V1, mediates the synthesis of 'Lys-63'-linked-polyubiquitin chains conjugated to proteins, such as ECSIT, IKBKG, IRAK1, AKT1 and AKT2. Also mediates ubiquitination of free/unanchored polyubiquitin chain that leads to MAP3K7 activation. Leads to the activation of NF-kappa-B and JUN. Seems to also play a role in dendritic cells (DCs) maturation and/or activation. Represses c-Myb-mediated transactivation, in B-lymphocytes. Adapter protein that seems to play a role in signal transduction initiated via TNF receptor, IL-1 receptor and IL-17 receptor. Regulates osteoclast differentiation by mediating the activation of adapter protein complex 1 (AP-1) and NF-kappa-B, in response to RANK-L stimulation. Together with MAP3K8, mediates CD40 signals that activate ERK in B-cells and macrophages, and thus may play a role in the regulation of immunoglobulin production. Acts as a regulator of the JNK and NF-kappa-B signaling pathways by initiating assembly of heterotypic 'Lys-63'-/'Lys-48'-linked branched ubiquitin chains that are then recognized by TAB2: TRAF6 catalyzes initial 'Lys-63'-linked-polyubiquitin chains that are then branched via 'Lys-48'-linked polyubiquitin by HUWE1. 'Lys-63'-/'Lys-48'-linked branched ubiquitin chains protect 'Lys-63'-linkages from CYLD deubiquitination. Also participates in the TCR signaling by ubiquitinating LAT. This is TNF receptor-associated factor 6 (Traf6) from Rattus norvegicus (Rat).